Here is a 507-residue protein sequence, read N- to C-terminus: Cytochrome P450 monooxygenase tpeC (507 aa).

A helical membrane pass occupies residues 24-44 (TLAIALIVGFVILKAIYNVFF). Cys449 contacts heme.

The protein belongs to the cytochrome P450 family. The cofactor is heme.

The protein resides in the membrane. It participates in secondary metabolite biosynthesis. Cytochrome P450 monooxygenase; part of the gene cluster that mediates the biosynthesis of polyesters containing 2,4-dihydroxy-6-(2-hydroxypropyl)benzoate and 3-hydroxybutyrate moieties, such as talapolyester G, 15G256beta and 15G256beta-2; as well as to oxidized derivatives such as 15G256alpha. The biosynthesis of the polyesters probably starts with the formation of the diketide 3-hydroxybutyryl-S-ACP catalyzed by the partially reducing polyketide synthase tpeA. The acceptance of 3-hydroxybutyryl by the non-reducing polyketide synthase tpeB would initiate further elongation and cyclization, catalyzed by KS and PT, respectively, to form 2,4-dihydroxy-6-(2-hydroxyn-propyl)benzoyl-S-ACP intermediate. The TE domain could catalyze lactonization at this step to yield 6-hydroxymellein as a derailment product. The polyesterification process maybe occurs when additional molecules of 3-hydroxybutyryl are transferred to tpeB. Following the first esterification step, an intramolecular cyclization catalyzed by the TE domain of tpeB would give talarodioxadione 1, whereas the ethyl esterification of talapolyester G perhaps happens spontaneously. Further oxidation by the cytochrome P450 monooxygenase tpeC then leads to the formation of oxidized derivatives. The polypeptide is Cytochrome P450 monooxygenase tpeC (Talaromyces stipitatus (strain ATCC 10500 / CBS 375.48 / QM 6759 / NRRL 1006) (Penicillium stipitatum)).